The chain runs to 141 residues: Large ribosomal subunit protein uL11 (141 aa).

The protein belongs to the universal ribosomal protein uL11 family. In terms of assembly, part of the ribosomal stalk of the 50S ribosomal subunit. Interacts with L10 and the large rRNA to form the base of the stalk. L10 forms an elongated spine to which L12 dimers bind in a sequential fashion forming a multimeric L10(L12)X complex. One or more lysine residues are methylated.

Functionally, forms part of the ribosomal stalk which helps the ribosome interact with GTP-bound translation factors. This Streptococcus pyogenes serotype M1 protein is Large ribosomal subunit protein uL11.